The following is a 1488-amino-acid chain: Phenolphthiocerol/phthiocerol polyketide synthase subunit E (1488 aa).

In terms of domain architecture, Ketosynthase family 3 (KS3) spans 5–438; sequence ENAIAVVGMA…GTNAHVVLEE (434 aa). Active-site for beta-ketoacyl synthase activity residues include Cys184, His320, and His361. Positions 551 to 868 are acyltransferase; that stretch reads VFLFPGQGAQ…GELWSAGVEV (318 aa). Ser641 (for malonyltransferase activity) is an active-site residue. In terms of domain architecture, Carrier spans 930–1004; sequence NGESQTEVTL…SLTAAVDASF (75 aa). Ser965 bears the O-(pantetheine 4'-phosphoryl)serine mark. 1286–1331 contributes to the NADP(+) binding site; that stretch reads EGVVAVELEGEGRSVLRPDVDLRRTVGWFTTYYPVPLACATGLGAL.

Requires NADP(+) as cofactor. The cofactor is pantetheine 4'-phosphate.

It catalyses the reaction icosanoyl-[(phenol)carboxyphthiodiolenone synthase] + 2 (S)-methylmalonyl-CoA + 3 malonyl-CoA + 5 NADPH + 10 H(+) = C32-carboxyphthiodiolenone-[(phenol)carboxyphthiodiolenone synthase] + 5 CO2 + 5 NADP(+) + 5 CoA + 2 H2O. It carries out the reaction docosanoyl-[(phenol)carboxyphthiodiolenone synthase] + 2 (S)-methylmalonyl-CoA + 3 malonyl-CoA + 5 NADPH + 10 H(+) = C34-carboxyphthiodiolenone-[(phenol)carboxyphthiodiolenone synthase] + 5 CO2 + 5 NADP(+) + 5 CoA + 2 H2O. The catalysed reaction is 17-(4-hydroxyphenyl)heptadecanoyl-[(phenol)carboxyphthiodiolenone synthase] + 2 (S)-methylmalonyl-CoA + 3 malonyl-CoA + 5 NADPH + 10 H(+) = C35-(phenol)carboxyphthiodiolenone-[(phenol)carboxyphthiodiolenone synthase] + 5 CO2 + 5 NADP(+) + 5 CoA + 2 H2O. The enzyme catalyses 19-(4-hydroxyphenyl)nonadecanoyl-[(phenol)carboxyphthiodiolenone synthase] + 2 (S)-methylmalonyl-CoA + 3 malonyl-CoA + 5 NADPH + 10 H(+) = C37-(phenol)carboxyphthiodiolenone-[(phenol)carboxyphthiodiolenone synthase] + 5 CO2 + 5 NADP(+) + 5 CoA + 2 H2O. Its pathway is lipid metabolism; fatty acid biosynthesis. Part of the PpsABCDE complex involved in the biosynthesis of the lipid core common to phthiocerols and phenolphthiocerols by successive additions of malonyl-CoA or methylmalonyl-CoA extender units. PpsA can accept as substrate the activated forms of either icosanoyl (C20), docosanoyl (C22) or lignoceroyl (C24) groups from FadD26, or a (4-hydroxyphenyl)-C17 or (4-hydroxyphenyl)-C19 fatty acyl from FadD29. PpsA initiates the biosynthesis and extends its substrate using a malonyl-CoA extender unit. The PpsB and PpsC proteins add the second and third malonyl-CoA extender units. PpsD adds an (R)-methylmalonyl unit and PpsE adds a second (R)-methylmalonyl unit. The incorporation of the methylmalonyl units results in formation of two branched methyl groups in the elongated product. This Mycobacterium bovis (strain ATCC BAA-935 / AF2122/97) protein is Phenolphthiocerol/phthiocerol polyketide synthase subunit E (ppsE).